A 137-amino-acid polypeptide reads, in one-letter code: Transcription antitermination protein NusB (137 aa).

Belongs to the NusB family.

Involved in transcription antitermination. Required for transcription of ribosomal RNA (rRNA) genes. Binds specifically to the boxA antiterminator sequence of the ribosomal RNA (rrn) operons. This Finegoldia magna (strain ATCC 29328 / DSM 20472 / WAL 2508) (Peptostreptococcus magnus) protein is Transcription antitermination protein NusB.